A 180-amino-acid polypeptide reads, in one-letter code: ATP-dependent protease subunit HslV (180 aa).

The active site involves T7. Residues A165, C168, and T171 each contribute to the Na(+) site.

Belongs to the peptidase T1B family. HslV subfamily. As to quaternary structure, a double ring-shaped homohexamer of HslV is capped on each side by a ring-shaped HslU homohexamer. The assembly of the HslU/HslV complex is dependent on binding of ATP.

The protein localises to the cytoplasm. The enzyme catalyses ATP-dependent cleavage of peptide bonds with broad specificity.. Allosterically activated by HslU binding. Its function is as follows. Protease subunit of a proteasome-like degradation complex believed to be a general protein degrading machinery. The protein is ATP-dependent protease subunit HslV of Geobacillus sp. (strain WCH70).